The following is a 214-amino-acid chain: uncharacterized protein (214 aa).

A signal peptide spans 1 to 24 (MKIWIKAICITSFVIQMSACSSSA). The 134-residue stretch at 64-197 (ETVKGKVLHI…KEAKAGVWSI (134 aa)) folds into the TNase-like domain. Catalysis depends on residues R91, E99, and R142.

This is an uncharacterized protein from Bacillus anthracis.